Here is a 311-residue protein sequence, read N- to C-terminus: Geranylgeranyl transferase type-2 subunit alpha (311 aa).

Residues 12-43 (EKAKAQRLKELEKIESYNKLVKSFEELREKQN) are a coiled coil. PFTA repeat units follow at residues 49 to 82 (ISLS…TETK), 93 to 126 (NEMK…DNCD), 129 to 162 (REMK…NIKL), 164 to 197 (DELK…YKEP), and 206 to 239 (EEFE…KSIP).

Belongs to the protein prenyltransferase subunit alpha family. In terms of assembly, heterodimer of an alpha and a beta subunit.

The enzyme catalyses geranylgeranyl diphosphate + L-cysteinyl-[protein] = S-geranylgeranyl-L-cysteinyl-[protein] + diphosphate. Functionally, catalyzes the transfer of a geranylgeranyl moiety from geranylgeranyl diphosphate to proteins with a C-terminal sequence motif -XCC or -XCXC, where both cysteines may become modified. The protein is Geranylgeranyl transferase type-2 subunit alpha (rabggta) of Dictyostelium discoideum (Social amoeba).